A 176-amino-acid chain; its full sequence is NAD(P)H-quinone oxidoreductase subunit 6, chloroplastic (176 aa).

5 helical membrane passes run 10–30, 33–53, 60–80, 95–115, and 152–172; these read ILML…VLLT, IYSA…YFLL, VAQL…AVMF, IGDG…MTTI, and FYLP…GAIT.

The protein belongs to the complex I subunit 6 family. As to quaternary structure, NDH is composed of at least 16 different subunits, 5 of which are encoded in the nucleus.

The protein localises to the plastid. It is found in the chloroplast thylakoid membrane. The enzyme catalyses a plastoquinone + NADH + (n+1) H(+)(in) = a plastoquinol + NAD(+) + n H(+)(out). It catalyses the reaction a plastoquinone + NADPH + (n+1) H(+)(in) = a plastoquinol + NADP(+) + n H(+)(out). NDH shuttles electrons from NAD(P)H:plastoquinone, via FMN and iron-sulfur (Fe-S) centers, to quinones in the photosynthetic chain and possibly in a chloroplast respiratory chain. The immediate electron acceptor for the enzyme in this species is believed to be plastoquinone. Couples the redox reaction to proton translocation, and thus conserves the redox energy in a proton gradient. The polypeptide is NAD(P)H-quinone oxidoreductase subunit 6, chloroplastic (ndhG) (Hordeum vulgare (Barley)).